The primary structure comprises 197 residues: NADH-quinone oxidoreductase subunit C (197 aa).

The protein belongs to the complex I 30 kDa subunit family. In terms of assembly, NDH-1 is composed of 14 different subunits. Subunits NuoB, C, D, E, F, and G constitute the peripheral sector of the complex.

The protein resides in the cell inner membrane. It catalyses the reaction a quinone + NADH + 5 H(+)(in) = a quinol + NAD(+) + 4 H(+)(out). Functionally, NDH-1 shuttles electrons from NADH, via FMN and iron-sulfur (Fe-S) centers, to quinones in the respiratory chain. The immediate electron acceptor for the enzyme in this species is believed to be ubiquinone. Couples the redox reaction to proton translocation (for every two electrons transferred, four hydrogen ions are translocated across the cytoplasmic membrane), and thus conserves the redox energy in a proton gradient. The chain is NADH-quinone oxidoreductase subunit C from Neisseria gonorrhoeae (strain ATCC 700825 / FA 1090).